A 432-amino-acid chain; its full sequence is Serine/threonine-protein kinase stk11 (432 aa).

In terms of domain architecture, Protein kinase spans 52-312 (YLMGDLLGEG…IQQIRQHNWF (261 aa)). Residues 58 to 66 (LGEGSYGKV) and Lys81 contribute to the ATP site. The Proton acceptor role is filled by Asp179. Thr192 carries the phosphothreonine; by autocatalysis modification. The disordered stretch occupies residues 398 to 432 (TESQLKTERRVSSSSQRKASTTGSKVRKLSACKQQ). The span at 409 to 421 (SSSSQRKASTTGS) shows a compositional bias: polar residues. The span at 422–432 (KVRKLSACKQQ) shows a compositional bias: basic residues. At Ser427 the chain carries Phosphoserine; by PKA.

It belongs to the protein kinase superfamily. CAMK Ser/Thr protein kinase family. LKB1 subfamily. Catalytic component of a trimeric complex composed of STK11/LKB1, STRAD (STRADA or STRADB) and CAB39/MO25 (CAB39/MO25alpha or CAB39L/MO25beta). The cofactor is Mg(2+). Mn(2+) is required as a cofactor. Post-translationally, phosphorylated by a cAMP-dependent protein kinase. Autophosphorylated in a reaction that prefers Mn(2+) to Mg(2+). Oocytes, eggs and early embryos.

The protein resides in the nucleus. It localises to the cytoplasm. It carries out the reaction L-seryl-[protein] + ATP = O-phospho-L-seryl-[protein] + ADP + H(+). It catalyses the reaction L-threonyl-[protein] + ATP = O-phospho-L-threonyl-[protein] + ADP + H(+). Tumor suppressor serine/threonine-protein kinase that controls the activity of AMP-activated protein kinase (AMPK) family members, thereby playing a role in various processes such as cell metabolism, cell polarity, apoptosis and DNA damage response. Acts by phosphorylating the T-loop of AMPK family proteins, leading to promote their activity. This is Serine/threonine-protein kinase stk11 from Xenopus laevis (African clawed frog).